A 447-amino-acid polypeptide reads, in one-letter code: Asparagine--tRNA ligase (447 aa).

This sequence belongs to the class-II aminoacyl-tRNA synthetase family. In terms of assembly, homodimer.

The protein localises to the cytoplasm. It catalyses the reaction tRNA(Asn) + L-asparagine + ATP = L-asparaginyl-tRNA(Asn) + AMP + diphosphate + H(+). The chain is Asparagine--tRNA ligase from Herpetosiphon aurantiacus (strain ATCC 23779 / DSM 785 / 114-95).